A 336-amino-acid polypeptide reads, in one-letter code: tRNA-dihydrouridine(20/20a) synthase (336 aa).

Residues 24-26 and Q77 contribute to the FMN site; that span reads PMM. Residue C107 is the Proton donor of the active site. Residues K146, H178, 218–220, and 240–241 each bind FMN; these read NGG and GR.

It belongs to the Dus family. DusA subfamily. Requires FMN as cofactor.

The catalysed reaction is 5,6-dihydrouridine(20) in tRNA + NADP(+) = uridine(20) in tRNA + NADPH + H(+). It carries out the reaction 5,6-dihydrouridine(20) in tRNA + NAD(+) = uridine(20) in tRNA + NADH + H(+). It catalyses the reaction 5,6-dihydrouridine(20a) in tRNA + NADP(+) = uridine(20a) in tRNA + NADPH + H(+). The enzyme catalyses 5,6-dihydrouridine(20a) in tRNA + NAD(+) = uridine(20a) in tRNA + NADH + H(+). Its function is as follows. Catalyzes the synthesis of 5,6-dihydrouridine (D), a modified base found in the D-loop of most tRNAs, via the reduction of the C5-C6 double bond in target uridines. Specifically modifies U20 and U20a in tRNAs. The chain is tRNA-dihydrouridine(20/20a) synthase from Pseudomonas putida (strain ATCC 47054 / DSM 6125 / CFBP 8728 / NCIMB 11950 / KT2440).